Consider the following 500-residue polypeptide: ATP synthase subunit alpha (500 aa).

169 to 176 (GDRQTGKT) contacts ATP.

This sequence belongs to the ATPase alpha/beta chains family. F-type ATPases have 2 components, CF(1) - the catalytic core - and CF(0) - the membrane proton channel. CF(1) has five subunits: alpha(3), beta(3), gamma(1), delta(1), epsilon(1). CF(0) has three main subunits: a(1), b(2) and c(9-12). The alpha and beta chains form an alternating ring which encloses part of the gamma chain. CF(1) is attached to CF(0) by a central stalk formed by the gamma and epsilon chains, while a peripheral stalk is formed by the delta and b chains.

Its subcellular location is the cell inner membrane. It catalyses the reaction ATP + H2O + 4 H(+)(in) = ADP + phosphate + 5 H(+)(out). Its function is as follows. Produces ATP from ADP in the presence of a proton gradient across the membrane. The alpha chain is a regulatory subunit. The polypeptide is ATP synthase subunit alpha (Fusobacterium nucleatum subsp. nucleatum (strain ATCC 25586 / DSM 15643 / BCRC 10681 / CIP 101130 / JCM 8532 / KCTC 2640 / LMG 13131 / VPI 4355)).